A 343-amino-acid polypeptide reads, in one-letter code: DNA repair and recombination protein RadA (343 aa).

An ATP-binding site is contributed by 107-114 (GEFGAGKS).

This sequence belongs to the eukaryotic RecA-like protein family.

Involved in DNA repair and in homologous recombination. Binds and assemble on single-stranded DNA to form a nucleoprotein filament. Hydrolyzes ATP in a ssDNA-dependent manner and promotes DNA strand exchange between homologous DNA molecules. This Halobacterium salinarum (strain ATCC 29341 / DSM 671 / R1) protein is DNA repair and recombination protein RadA.